A 178-amino-acid chain; its full sequence is ATP-dependent protease subunit HslV (178 aa).

T7 is a catalytic residue. Residues G162, C165, and T168 each coordinate Na(+).

It belongs to the peptidase T1B family. HslV subfamily. A double ring-shaped homohexamer of HslV is capped on each side by a ring-shaped HslU homohexamer. The assembly of the HslU/HslV complex is dependent on binding of ATP.

The protein resides in the cytoplasm. It carries out the reaction ATP-dependent cleavage of peptide bonds with broad specificity.. With respect to regulation, allosterically activated by HslU binding. Its function is as follows. Protease subunit of a proteasome-like degradation complex believed to be a general protein degrading machinery. This chain is ATP-dependent protease subunit HslV, found in Sulfurihydrogenibium sp. (strain YO3AOP1).